Consider the following 590-residue polypeptide: Aspartate--tRNA(Asp/Asn) ligase (590 aa).

An L-aspartate-binding site is contributed by Glu175. Residues 199-202 (QQYK) are aspartate. L-aspartate-binding residues include Arg221 and His450. 221-223 (RDE) serves as a coordination point for ATP. Glu484 serves as a coordination point for ATP. Position 491 (Arg491) interacts with L-aspartate. Residue 536–539 (GVDR) participates in ATP binding.

Belongs to the class-II aminoacyl-tRNA synthetase family. Type 1 subfamily. Homodimer.

It localises to the cytoplasm. The enzyme catalyses tRNA(Asx) + L-aspartate + ATP = L-aspartyl-tRNA(Asx) + AMP + diphosphate. Aspartyl-tRNA synthetase with relaxed tRNA specificity since it is able to aspartylate not only its cognate tRNA(Asp) but also tRNA(Asn). Reaction proceeds in two steps: L-aspartate is first activated by ATP to form Asp-AMP and then transferred to the acceptor end of tRNA(Asp/Asn). This chain is Aspartate--tRNA(Asp/Asn) ligase, found in Nitrobacter winogradskyi (strain ATCC 25391 / DSM 10237 / CIP 104748 / NCIMB 11846 / Nb-255).